Reading from the N-terminus, the 208-residue chain is Large ribosomal subunit protein uL4 (208 aa).

The interval Ala-51–Lys-79 is disordered.

It belongs to the universal ribosomal protein uL4 family. As to quaternary structure, part of the 50S ribosomal subunit.

Functionally, one of the primary rRNA binding proteins, this protein initially binds near the 5'-end of the 23S rRNA. It is important during the early stages of 50S assembly. It makes multiple contacts with different domains of the 23S rRNA in the assembled 50S subunit and ribosome. Forms part of the polypeptide exit tunnel. This Cytophaga hutchinsonii (strain ATCC 33406 / DSM 1761 / CIP 103989 / NBRC 15051 / NCIMB 9469 / D465) protein is Large ribosomal subunit protein uL4.